Consider the following 507-residue polypeptide: O-fucosyltransferase 30 (507 aa).

Residues alanine 26–threonine 46 traverse the membrane as a helical; Signal-anchor for type II membrane protein segment. N-linked (GlcNAc...) asparagine glycans are attached at residues asparagine 110, asparagine 146, asparagine 398, and asparagine 410.

This sequence belongs to the glycosyltransferase GT106 family.

The protein localises to the membrane. It functions in the pathway glycan metabolism. The polypeptide is O-fucosyltransferase 30 (Arabidopsis thaliana (Mouse-ear cress)).